We begin with the raw amino-acid sequence, 300 residues long: Ribosomal protein bS6--L-glutamate ligase (300 aa).

Residues Met-104–Glu-287 form the ATP-grasp domain. ATP contacts are provided by residues Lys-141, Glu-178–Tyr-179, Asp-187, and Arg-211–Asn-213. Mg(2+)-binding residues include Asp-248, Glu-260, and Asn-262. Positions 248, 260, and 262 each coordinate Mn(2+).

Belongs to the RimK family. Mg(2+) is required as a cofactor. It depends on Mn(2+) as a cofactor.

Functionally, an L-glutamate ligase that catalyzes the ATP-dependent post-translational addition of glutamate residues to the C-terminus of ribosomal protein bS6 (RpsF). Is also able to catalyze the synthesis of poly-alpha-glutamate in vitro, via ATP hydrolysis from unprotected glutamate as substrate. The number of glutamate residues added to either RpsF or to poly-alpha-glutamate changes with pH. This is Ribosomal protein bS6--L-glutamate ligase from Shigella flexneri serotype 5b (strain 8401).